We begin with the raw amino-acid sequence, 614 residues long: Zinc metalloproteinase-disintegrin-like HR1b (614 aa).

The first 20 residues, 1 to 20, serve as a signal peptide directing secretion; that stretch reads MIQVLLVTICLAVFPYQGSS. Positions 21-191 are excised as a propeptide; that stretch reads IILESGNVND…KASKLVVTAE (171 aa). Gln192 is subject to Pyrrolidone carboxylic acid. One can recognise a Peptidase M12B domain in the interval 198-394; sequence RYIKLAIVVD…HKPQCILNAP (197 aa). Asn264 carries N-linked (GlcNAc...) asparagine glycosylation. 3 disulfide bridges follow: Cys309/Cys389, Cys349/Cys373, and Cys351/Cys356. His334 lines the Zn(2+) pocket. The active site involves Glu335. Residues His338 and His344 each coordinate Zn(2+). The N-linked (GlcNAc...) asparagine glycan is linked to Asn372. Positions 395–398 are excised as a propeptide; the sequence is SKTD. The region spanning 402–488 is the Disintegrin domain; the sequence is PPVCGNELLE…DCPTDRFHRN (87 aa). Ca(2+) contacts are provided by Val404, Asn407, Leu409, Glu411, Glu414, and Asp417. 22 cysteine pairs are disulfide-bonded: Cys405/Cys424, Cys405/Cys434, Cys416/Cys429, Cys416/Cys434, Cys418/Cys424, Cys428/Cys451, Cys442/Cys448, Cys447/Cys473, Cys460/Cys480, Cys467/Cys492, Cys467/Cys499, Cys492/Cys504, Cys499/Cys504, Cys511/Cys526, Cys511/Cys561, Cys526/Cys568, Cys539/Cys549, Cys549/Cys556, Cys556/Cys593, Cys561/Cys568, Cys587/Cys598, and Cys593/Cys598. Residues 466 to 468 carry the D/ECD-tripeptide motif; the sequence is ECD. The N-linked (GlcNAc...) asparagine glycan is linked to Asn518. Asn571 carries an N-linked (GlcNAc...) asparagine glycan. A propeptide spanning residues 608–614 is cleaved from the precursor; sequence TTVFSLI.

It belongs to the venom metalloproteinase (M12B) family. P-III subfamily. P-IIIb sub-subfamily. In terms of assembly, monomer. Requires Zn(2+) as cofactor. As to expression, expressed by the venom gland.

It is found in the secreted. Zinc protease that induces hemorrhage. Has preference for Tyr, Leu, Arg, Met, and Phe at the P1 position, in descending order (in vitro). Shows equal preference for the sequences of Ala-Asp and Arg-Ile at the P3-P2 position with different enzyme cleavage sites across the P1 position: the N-terminus side for Ala-Asp and the C-terminus side for Arg-Ile. Functionally, inhibits platelet aggregation induced by ADP, thrombin, platelet-activating factor and collagen. Acts by inhibiting fibrinogen interaction with platelet receptors alpha-IIb/beta-3 (ITGA2B/ITGB3). The protein is Zinc metalloproteinase-disintegrin-like HR1b of Protobothrops flavoviridis (Habu).